We begin with the raw amino-acid sequence, 128 residues long: Sulfurtransferase TusD (128 aa).

Catalysis depends on Cys78, which acts as the Cysteine persulfide intermediate.

The protein belongs to the DsrE/TusD family. As to quaternary structure, heterohexamer, formed by a dimer of trimers. The hexameric TusBCD complex contains 2 copies each of TusB, TusC and TusD. The TusBCD complex interacts with TusE.

It localises to the cytoplasm. Its function is as follows. Part of a sulfur-relay system required for 2-thiolation of 5-methylaminomethyl-2-thiouridine (mnm(5)s(2)U) at tRNA wobble positions. Accepts sulfur from TusA and transfers it in turn to TusE. This Salmonella arizonae (strain ATCC BAA-731 / CDC346-86 / RSK2980) protein is Sulfurtransferase TusD.